The primary structure comprises 421 residues: DNA (cytosine-5)-methyltransferase 3-like (421 aa).

Over residues 1–14 the composition is skewed to polar residues; it reads MGSRETPSSCSKTL. Positions 1 to 39 are disordered; it reads MGSRETPSSCSKTLETLDLETSDSSSPDADSPLEEQWLK. Residues 75-207 enclose the ADD domain; it reads EVKVNRRSIE…LKAFHDQEGA (133 aa). The GATA-type; atypical zinc-finger motif lies at 86 to 116; it reads ICLCCGTLQVYTRHPLFEGGLCAPCKDKFLE. A PHD-type; atypical zinc finger spans residues 127–183; that stretch reads QSYCTICCSGGTLFICESPDCTRCYCFECVDILVGPGTSERINAMACWVCFLCLPFS.

As to quaternary structure, homodimer. Heterotetramer composed of 1 DNMT3A homodimer and 2 DNMT3L subunits (DNMT3L-DNMT3A-DNMT3A-DNMT3L). Interacts with histone H3 (via N-terminus); interaction is strongly inhibited by methylation at lysine 4 (H3K4me). Interacts with EZH2; the interaction is direct. Interacts with SPOCD1. Expressed in testis, thymus, ovary, and heart.

Its subcellular location is the nucleus. In terms of biological role, catalytically inactive regulatory factor of DNA methyltransferases that can either promote or inhibit DNA methylation depending on the context. Essential for the function of DNMT3A and DNMT3B: activates DNMT3A and DNMT3B by binding to their catalytic domain. Acts by accelerating the binding of DNA and S-adenosyl-L-methionine (AdoMet) to the methyltransferases and dissociates from the complex after DNA binding to the methyltransferases. Recognizes unmethylated histone H3 lysine 4 (H3K4me0) and induces de novo DNA methylation by recruitment or activation of DNMT3. Plays a key role in embryonic stem cells and germ cells. In germ cells, required for the methylation of imprinted loci together with DNMT3A. In male germ cells, specifically required to methylate retrotransposons, preventing their mobilization. Plays a key role in embryonic stem cells (ESCs) by acting both as an positive and negative regulator of DNA methylation. While it promotes DNA methylation of housekeeping genes together with DNMT3A and DNMT3B, it also acts as an inhibitor of DNA methylation at the promoter of bivalent genes. Interacts with the EZH2 component of the PRC2/EED-EZH2 complex, preventing interaction of DNMT3A and DNMT3B with the PRC2/EED-EZH2 complex, leading to maintain low methylation levels at the promoters of bivalent genes. Promotes differentiation of ESCs into primordial germ cells by inhibiting DNA methylation at the promoter of RHOX5, thereby activating its expression. The sequence is that of DNA (cytosine-5)-methyltransferase 3-like (Dnmt3l) from Mus musculus (Mouse).